The chain runs to 73 residues: Gastricsin (73 aa).

A propeptide spans 1 to 43 (SVIKVPLKKLKSIRQAMKEKGLLEEFLKTHKYDPAQRYRIGDI) (activation peptide). The Peptidase A1 domain maps to 57–73 (YFGEISIGTPPQNFLVL).

This sequence belongs to the peptidase A1 family.

It is found in the secreted. The catalysed reaction is More restricted specificity than pepsin A, but shows preferential cleavage at Tyr-|-Xaa bonds. High activity on hemoglobin.. Functionally, hydrolyzes a variety of proteins. This Sus scrofa (Pig) protein is Gastricsin (PGC).